The primary structure comprises 237 residues: Cytochrome c oxidase subunit 2 (237 aa).

At 1–30 (MNLVAPTPWGLFFQDSATPQMEGIEELHNN) the chain is on the mitochondrial intermembrane side. A helical membrane pass occupies residues 31–51 (IMFYLTIILFSVTWMMITIIK). Residues 52 to 67 (SFVNTKSPISHKYMNH) lie on the Mitochondrial matrix side of the membrane. The helical transmembrane segment at 68 to 94 (GTLIELIWTITPAVILILIAFPSFKLL) threads the bilayer. The Mitochondrial intermembrane segment spans residues 95-237 (YLMDEVMDPS…SVSLKNFYYD (143 aa)). The Cu cation site is built by H176, C211, E213, C215, H219, and M222. Residue E213 participates in Mg(2+) binding.

The protein belongs to the cytochrome c oxidase subunit 2 family. In terms of assembly, component of the cytochrome c oxidase (complex IV, CIV), a multisubunit enzyme composed of a catalytic core of 3 subunits and several supernumerary subunits. The complex exists as a monomer or a dimer and forms supercomplexes (SCs) in the inner mitochondrial membrane with ubiquinol-cytochrome c oxidoreductase (cytochrome b-c1 complex, complex III, CIII). Requires Cu cation as cofactor.

It is found in the mitochondrion inner membrane. It catalyses the reaction 4 Fe(II)-[cytochrome c] + O2 + 8 H(+)(in) = 4 Fe(III)-[cytochrome c] + 2 H2O + 4 H(+)(out). Functionally, component of the cytochrome c oxidase, the last enzyme in the mitochondrial electron transport chain which drives oxidative phosphorylation. The respiratory chain contains 3 multisubunit complexes succinate dehydrogenase (complex II, CII), ubiquinol-cytochrome c oxidoreductase (cytochrome b-c1 complex, complex III, CIII) and cytochrome c oxidase (complex IV, CIV), that cooperate to transfer electrons derived from NADH and succinate to molecular oxygen, creating an electrochemical gradient over the inner membrane that drives transmembrane transport and the ATP synthase. Cytochrome c oxidase is the component of the respiratory chain that catalyzes the reduction of oxygen to water. Electrons originating from reduced cytochrome c in the intermembrane space (IMS) are transferred via the dinuclear copper A center (CU(A)) of subunit 2 and heme A of subunit 1 to the active site in subunit 1, a binuclear center (BNC) formed by heme A3 and copper B (CU(B)). The BNC reduces molecular oxygen to 2 water molecules using 4 electrons from cytochrome c in the IMS and 4 protons from the mitochondrial matrix. This chain is Cytochrome c oxidase subunit 2 (COX2), found in Trichophyton rubrum (Athlete's foot fungus).